An 82-amino-acid chain; its full sequence is Sec-independent protein translocase protein TatA (82 aa).

A helical membrane pass occupies residues 2–22 (GFGGISLWQLLIVLAIIVLLF). The interval 43 to 82 (KAMSDEKNTDKEKPEQIQKSEESAPLDSAHTEKNKDNNKV) is disordered. 2 stretches are compositionally biased toward basic and acidic residues: residues 44-64 (AMSD…KSEE) and 71-82 (AHTEKNKDNNKV).

The protein belongs to the TatA/E family. As to quaternary structure, the Tat system comprises two distinct complexes: a TatABC complex, containing multiple copies of TatA, TatB and TatC subunits, and a separate TatA complex, containing only TatA subunits. Substrates initially bind to the TatABC complex, which probably triggers association of the separate TatA complex to form the active translocon.

The protein resides in the cell inner membrane. Part of the twin-arginine translocation (Tat) system that transports large folded proteins containing a characteristic twin-arginine motif in their signal peptide across membranes. TatA could form the protein-conducting channel of the Tat system. This is Sec-independent protein translocase protein TatA from Pseudoalteromonas translucida (strain TAC 125).